The following is a 1326-amino-acid chain: Paired amphipathic helix protein Sin3-like 4 (1326 aa).

3 consecutive PAH domains span residues Q8–G78, K95–T165, and I292–C367. 4 disordered regions span residues D272–D299, V715–T812, S844–L864, and S927–M1000. Positions G721 to E737 are enriched in basic and acidic residues. 4 stretches are compositionally biased toward polar residues: residues S744–S757, S781–T805, S844–T861, and P942–D961. Over residues D967–S981 the composition is skewed to basic and acidic residues.

The protein resides in the nucleus. Acts as a transcriptional repressor. Plays roles in regulating gene expression and genome stability. This chain is Paired amphipathic helix protein Sin3-like 4 (SNL4), found in Arabidopsis thaliana (Mouse-ear cress).